Here is a 307-residue protein sequence, read N- to C-terminus: Ribonuclease Z (307 aa).

Zn(2+) is bound by residues His-61, His-63, Asp-65, His-66, His-138, Asp-208, and His-264. Asp-65 (proton acceptor) is an active-site residue.

It belongs to the RNase Z family. In terms of assembly, homodimer. The cofactor is Zn(2+).

The catalysed reaction is Endonucleolytic cleavage of RNA, removing extra 3' nucleotides from tRNA precursor, generating 3' termini of tRNAs. A 3'-hydroxy group is left at the tRNA terminus and a 5'-phosphoryl group is left at the trailer molecule.. In terms of biological role, zinc phosphodiesterase, which displays some tRNA 3'-processing endonuclease activity. Probably involved in tRNA maturation, by removing a 3'-trailer from precursor tRNA. Also shows activity toward a broad range of substrates, such as intron containing pre-tRNAs, 5' extended precursors and non-RNA substrates. The sequence is that of Ribonuclease Z from Pyrococcus furiosus (strain ATCC 43587 / DSM 3638 / JCM 8422 / Vc1).